Reading from the N-terminus, the 300-residue chain is Glutamyl-Q tRNA(Asp) synthetase (300 aa).

Residues 8–12 (RFAPS) and glutamate 44 contribute to the L-glutamate site. The 'HIGH' region signature appears at 11–21 (PSPTGALHAGS). Cysteine 100, cysteine 102, tyrosine 126, and cysteine 130 together coordinate Zn(2+). Positions 190 and 208 each coordinate L-glutamate. The short motif at 246–250 (KLSKQ) is the 'KMSKS' region element. Lysine 249 provides a ligand contact to ATP.

The protein belongs to the class-I aminoacyl-tRNA synthetase family. GluQ subfamily. Requires Zn(2+) as cofactor.

In terms of biological role, catalyzes the tRNA-independent activation of glutamate in presence of ATP and the subsequent transfer of glutamate onto a tRNA(Asp). Glutamate is transferred on the 2-amino-5-(4,5-dihydroxy-2-cyclopenten-1-yl) moiety of the queuosine in the wobble position of the QUC anticodon. The chain is Glutamyl-Q tRNA(Asp) synthetase from Leptothrix cholodnii (strain ATCC 51168 / LMG 8142 / SP-6) (Leptothrix discophora (strain SP-6)).